We begin with the raw amino-acid sequence, 479 residues long: uncharacterized protein (479 aa).

Residues 150–158 (TSGSTGKPK), aspartate 360, arginine 375, and lysine 462 contribute to the ATP site.

It belongs to the ATP-dependent AMP-binding enzyme family.

May be involved in fatty acid metabolism. This is an uncharacterized protein from Bacillus subtilis (strain 168).